We begin with the raw amino-acid sequence, 268 residues long: Phosphatidylglycerol--prolipoprotein diacylglyceryl transferase (268 aa).

4 helical membrane-spanning segments follow: residues 14–34, 57–77, 90–110, and 117–137; these read LGPI…FAGW, LTFY…IIFY, FFLW…LIAF, and IGAN…IGLG. An a 1,2-diacyl-sn-glycero-3-phospho-(1'-sn-glycerol)-binding site is contributed by Arg-140. Transmembrane regions (helical) follow at residues 174 to 194, 200 to 220, and 238 to 258; these read QLFE…LVTI, YLVL…CEFF, and GQIL…AVFI.

It belongs to the Lgt family.

The protein localises to the cell inner membrane. It carries out the reaction L-cysteinyl-[prolipoprotein] + a 1,2-diacyl-sn-glycero-3-phospho-(1'-sn-glycerol) = an S-1,2-diacyl-sn-glyceryl-L-cysteinyl-[prolipoprotein] + sn-glycerol 1-phosphate + H(+). The protein operates within protein modification; lipoprotein biosynthesis (diacylglyceryl transfer). Catalyzes the transfer of the diacylglyceryl group from phosphatidylglycerol to the sulfhydryl group of the N-terminal cysteine of a prolipoprotein, the first step in the formation of mature lipoproteins. The protein is Phosphatidylglycerol--prolipoprotein diacylglyceryl transferase of Francisella tularensis subsp. holarctica (strain FTNF002-00 / FTA).